Here is a 214-residue protein sequence, read N- to C-terminus: Outer membrane lipoprotein MapA (214 aa).

Positions 1–17 (MFKKFLIFIVPILFLSA) are cleaved as a signal peptide. A lipid anchor (N-palmitoyl cysteine) is attached at Cys-18. Cys-18 is lipidated: S-diacylglycerol cysteine.

Its subcellular location is the cell outer membrane. This is Outer membrane lipoprotein MapA (mapA) from Campylobacter jejuni subsp. jejuni serotype O:6 (strain 81116 / NCTC 11828).